A 197-amino-acid chain; its full sequence is dITP/XTP pyrophosphatase (197 aa).

Substrate is bound at residue 8–13 (TGNPGK). Residues Glu-40 and Asp-69 each contribute to the Mg(2+) site. Asp-69 (proton acceptor) is an active-site residue. Substrate is bound by residues Ser-70, 154–157 (FGYD), Lys-177, and 182–183 (HR).

Belongs to the HAM1 NTPase family. As to quaternary structure, homodimer. It depends on Mg(2+) as a cofactor.

It catalyses the reaction XTP + H2O = XMP + diphosphate + H(+). The enzyme catalyses dITP + H2O = dIMP + diphosphate + H(+). It carries out the reaction ITP + H2O = IMP + diphosphate + H(+). Pyrophosphatase that catalyzes the hydrolysis of nucleoside triphosphates to their monophosphate derivatives, with a high preference for the non-canonical purine nucleotides XTP (xanthosine triphosphate), dITP (deoxyinosine triphosphate) and ITP. Seems to function as a house-cleaning enzyme that removes non-canonical purine nucleotides from the nucleotide pool, thus preventing their incorporation into DNA/RNA and avoiding chromosomal lesions. The polypeptide is dITP/XTP pyrophosphatase (Pectobacterium atrosepticum (strain SCRI 1043 / ATCC BAA-672) (Erwinia carotovora subsp. atroseptica)).